Consider the following 367-residue polypeptide: MQTLHVELGERSYPIYIGSGLLSRPELLSRHVAGRQVAVVTNETVAPLYLQTLLKSLEGFNVATVVLPDGEAFKNWETLQLIFDGLLTARHDRRTTVVALGGGVIGDMAGFAAACYQRGVDFIQVPTTLLSQVDSSVGGKTGINHPLGKNMVGAFYQPKAVLIDTASLDTLPARELSAGLAEVIKYGLICDEPFLGWLEANMAALRSLDQDALTYAIERSCAAKAQVVGADERESGVRATLNLGHTFGHAIETEQGYGVWLHGEAVAAGTVMALEMSHRLGWISVAERDRGVRLLQAAGLPIVPPRDMTPAQFLEHMAVDKKVLDGQLRLVLLKRLGEAVVTADYPREILDATLRSDYVALAQSFNS.

Residues 69-74, 103-107, 127-128, lysine 140, and lysine 149 contribute to the NAD(+) site; these read DGEAFK, GVIGD, and TT. Zn(2+) contacts are provided by glutamate 182, histidine 245, and histidine 262.

This sequence belongs to the sugar phosphate cyclases superfamily. Dehydroquinate synthase family. Requires Co(2+) as cofactor. The cofactor is Zn(2+). NAD(+) serves as cofactor.

The protein localises to the cytoplasm. The enzyme catalyses 7-phospho-2-dehydro-3-deoxy-D-arabino-heptonate = 3-dehydroquinate + phosphate. It participates in metabolic intermediate biosynthesis; chorismate biosynthesis; chorismate from D-erythrose 4-phosphate and phosphoenolpyruvate: step 2/7. In terms of biological role, catalyzes the conversion of 3-deoxy-D-arabino-heptulosonate 7-phosphate (DAHP) to dehydroquinate (DHQ). The sequence is that of 3-dehydroquinate synthase from Ectopseudomonas mendocina (strain ymp) (Pseudomonas mendocina).